We begin with the raw amino-acid sequence, 1744 residues long: Complement C4-B (1744 aa).

The N-terminal stretch at 1-19 is a signal peptide; that stretch reads MRLLWGLIWASSFFTLSLQ. A disulfide bond links C68 and C97. A glycan (N-linked (GlcNAc...) asparagine) is linked at N226. C635 and C669 are oxidised to a cystine. Residues 676–679 constitute a propeptide that is removed on maturation; sequence RKKR. 3 cysteine pairs are disulfide-bonded: C702–C728, C703–C735, and C716–C736. An Anaphylatoxin-like domain is found at 702 to 736; it reads CCQDGVTRLPMMRSCEQRAARVQQPDCREPFLSCC. N-linked (GlcNAc...) asparagine glycosylation occurs at N862. Position 918 is a phosphoserine (S918). The isoglutamyl cysteine thioester (Cys-Gln) cross-link spans 1010 to 1013; sequence CGEQ. Residues N1328 and N1391 are each glycosylated (N-linked (GlcNAc...) asparagine). 3 positions are modified to sulfotyrosine: Y1417, Y1420, and Y1422. Residues 1447-1453 constitute a propeptide that is removed on maturation; that stretch reads RRNRRRR. 5 cysteine pairs are disulfide-bonded: C1471–C1535, C1583–C1588, C1595–C1673, C1618–C1742, and C1718–C1727. Residues 1595 to 1742 form the NTR domain; the sequence is CPRQRRALER…FLQEYGTQGC (148 aa).

In absence of complement activation, circulates in blood as a disulfide-linked trimer of an alpha, beta and gamma chain. In terms of assembly, complement C4b is composed of complement C4b-A, complement C4 beta and complement C4 gamma chains that are associated via disulfide bonds. Non-enzymatic component of the C3 convertase, also named C4bC2b, composed of the serine protease complement C2b (C2), as well as complement C4b. Non-enzymatic component of the C5 convertase, also named C4bC2bC3b, composed of the serine protease complement C2b (C2), complement C3b, as well as complement C4b. Interacts with CR1 (via Sushi 1 and Sushi 2 domains). As to quaternary structure, (Microbial infection) Binds B.burgdorferi OspC, the interaction is inhibited by complement factor C2. This binding may inhibit the complement cascade and allow the bacteria to survive in the host bloodstream. Post-translationally, prior to secretion, the single-chain precursor is enzymatically cleaved by plasminogen (PLG) to yield non-identical chains alpha, beta and gamma. During activation of the complement systems, the alpha chain is cleaved into C4a and C4b by different proteases depending on the complement pathway: C4b stays linked to the beta and gamma chains, while C4a is released in the plasma. The alpha chain is cleaved by C1S to generate C4a and C4b following activation by the classical complement system. The alpha chain is cleaved to generate C4a and C4b by MASP2 following activation by the lectin complement system. The alpha chain is cleaved by GZMK to generate C4a and C4b following activation by the GZMK complement system. Further degradation of C4b by C1 into the inactive fragments C4c and C4d blocks the generation of C3 convertase. The proteolytic cleavages often are incomplete so that many structural forms can be found in plasma. In terms of processing, upon activation, the internal thioester bond reacts with carbohydrate antigens on the target surface to form amide or ester bonds, leading to covalent association with the surface of pathogens. Complement C4b interacts with complement C3b via a thioester linkage. Post-translationally, N- and O-glycosylated. O-glycosylated with a core 1 or possibly core 8 glycan. Complement component C4 is expressed at highest levels in the liver, at moderate levels in the adrenal cortex, adrenal medulla, thyroid gland, and the kidney, and at lowest levels in the heart, ovary, small intestine, thymus, pancreas and spleen. The extra-hepatic sites of expression may be important for the local protection and inflammatory response.

It is found in the secreted. Its subcellular location is the synapse. It localises to the cell projection. The protein resides in the axon. The protein localises to the dendrite. It is found in the cell surface. Its function is as follows. Precursor of non-enzymatic components of the classical, lectin and GZMK complement pathways, which consist in a cascade of proteins that leads to phagocytosis and breakdown of pathogens and signaling that strengthens the adaptive immune system. Non-enzymatic component of C3 and C5 convertases. Generated following cleavage by complement proteases (C1S, MASP2 or GZMK, depending on the complement pathway), it covalently attaches to the surface of pathogens, where it acts as an opsonin that marks the surface of antigens for removal. It then recruits the serine protease complement C2b to form the C3 and C5 convertases, which cleave and activate C3 and C5, respectively, the next components of the complement pathways. Complement C4b-B isotype catalyzes the transacylation of the thioester carbonyl group to form ester bonds with carbohydrate antigens, while C4b-A isotype is responsible for effective binding to form amide bonds with immune aggregates or protein antigens. In terms of biological role, putative humoral mediator released following cleavage by complement proteases (C1S, MASP2 or GZMK, depending on the complement pathway). While it is strongly similar to anaphylatoxins, its role is unclear. Was reported to act as a mediator of local inflammatory process; however these effects were probably due to contamination with C3a and/C5a anaphylatoxins in biological assays. This is Complement C4-B from Homo sapiens (Human).